The following is an 89-amino-acid chain: Small ribosomal subunit protein uS15 (89 aa).

Belongs to the universal ribosomal protein uS15 family. Part of the 30S ribosomal subunit. Forms a bridge to the 50S subunit in the 70S ribosome, contacting the 23S rRNA.

Its function is as follows. One of the primary rRNA binding proteins, it binds directly to 16S rRNA where it helps nucleate assembly of the platform of the 30S subunit by binding and bridging several RNA helices of the 16S rRNA. In terms of biological role, forms an intersubunit bridge (bridge B4) with the 23S rRNA of the 50S subunit in the ribosome. This chain is Small ribosomal subunit protein uS15, found in Azotobacter vinelandii (strain DJ / ATCC BAA-1303).